The chain runs to 672 residues: MPKRGGGSSQRYNNNVGNGGGRYNAPEDFDDFDVEDRQRRKDRNKRRVSFKPSQCLHNKKDIKLRPEDLRRWDEDDDMSDMTTAVKDRPTSRRRGSPIPRGKFGKLMPNSFGWYQVTLQNAQIYEKETLLSALLAAMSPHVFIPQYWRVERNCVIFFTDDYEAAERIQHLGKNGHLPDGYRLMPRVRSGIPLVAIDDAFKEKMKVTMAKRYNIQTKALDLSRFHADPDLKQVFCPLFRQNVMGAAIDIMCDNIPDLEALNLNDNSISSMEAFKGVEKRLPNLKILYLGDNKIPSLAHLVVLRNLSILELVLKNNPCRSRYKDSQQFISEVRRKFPKLVKLDGETLEPQITFDLSEQGRLLETKASYLCDVAGAEVVRQFLDQYFRIFDSGNRQALLDAYHEKAMLSISMPSASQAGRLNSFWKFNRNLRRLLNGEENRTRNLKYGRLACVSTLDEWPKTQHDRRTFTVDLTIYNTSMMVFTVTGLFKELNDETNNPASMELYDVRHFARTYVVVPQNNGFCIRNETIFITNATHEQVREFKRSQHQPAPGAMPSTSSAVTSPQAGAAAGLQGRLNALGVATGPVAILSGDPLAATAPVNSGSAAISTTAVAPGAQDESTKMQMIEAMSAQSQMNVIWSRKCLEETNWDFNHAAFVFEKLFKENKIPPEAFMK.

Disordered stretches follow at residues 1–52 (MPKR…SFKP) and 73–101 (DEDD…IPRG). The segment covering 40–49 (RKDRNKRRVS) has biased composition (basic residues). An RRM domain is found at 113-193 (WYQVTLQNAQ…PRVRSGIPLV (81 aa)). LRR repeat units lie at residues 255–280 (DLEA…KRLP), 281–304 (NLKI…LRNL), 305–332 (SILE…EVRR), and 333–360 (KFPK…GRLL). The 155-residue stretch at 375–529 (VVRQFLDQYF…FCIRNETIFI (155 aa)) folds into the NTF2 domain. Positions 541-564 (KRSQHQPAPGAMPSTSSAVTSPQA) are disordered. Residues 553–563 (PSTSSAVTSPQ) are compositionally biased toward polar residues. The residue at position 561 (Ser-561) is a Phosphoserine. The TAP-C domain maps to 618 to 672 (STKMQMIEAMSAQSQMNVIWSRKCLEETNWDFNHAAFVFEKLFKENKIPPEAFMK).

The protein belongs to the NXF family. Interacts with Nxt1. Interacts with ZC3H3. Forms a complex with Nup358/RanBP2, RanGAP and Nxt1. Interacts with Nup54 and Nup58. Interacts with Orc3 and Hpr1. Expressed ubiquitously.

It localises to the nucleus. The protein localises to the nucleoplasm. Its subcellular location is the cytoplasm. The protein resides in the nucleus envelope. Mediates the export of the majority of mRNAs from the nucleus to the cytoplasm. In ovarian follicle cells, plays a role in transposable element silencing regulation by enabling the nuclear export of flamenco (flam) transcripts and subsequent piRNA biogenesis. This chain is Nuclear RNA export factor 1, found in Drosophila melanogaster (Fruit fly).